Reading from the N-terminus, the 1148-residue chain is Phospholipid-transporting ATPase IB (1148 aa).

Over 1–44 (MSRATSVGDQLEAPARIIYLNQSHLNKFCDNRISTAKYSVLTFL) the chain is Cytoplasmic. Threonine 5 is modified (phosphothreonine). The helical transmembrane segment at 45 to 66 (PRFLYEQIRRAANAFFLFIALL) threads the bilayer. The Exoplasmic loop segment spans residues 67–71 (QQIPD). Residues 72 to 94 (VSPTGRYTTLVPLVIILTIAGIK) form a helical membrane-spanning segment. The Cytoplasmic segment spans residues 95–276 (EIIEDFKRHK…SNVEKVTNVQ (182 aa)). The helical transmembrane segment at 277-298 (ILVLFGILLVMALVSSVGALFW) threads the bilayer. The Exoplasmic loop portion of the chain corresponds to 299–323 (NGSHGGKSWYIKKMDTNSDNFGYNL). The chain crosses the membrane as a helical span at residues 324-345 (LTFIILYNNLIPISLLVTLEVV). The Cytoplasmic portion of the chain corresponds to 346–837 (KYTQALFINW…GAWSYNRVTK (492 aa)). Aspartate 388 functions as the 4-aspartylphosphate intermediate in the catalytic mechanism. Aspartate 388, lysine 389, threonine 390, glutamate 488, phenylalanine 529, lysine 552, arginine 585, threonine 665, glycine 666, aspartate 667, arginine 755, and lysine 761 together coordinate ATP. Aspartate 388 is a Mg(2+) binding site. A Mg(2+)-binding site is contributed by threonine 390. Aspartate 781 is a Mg(2+) binding site. Positions 784 and 785 each coordinate ATP. Residue aspartate 785 participates in Mg(2+) binding. A helical transmembrane segment spans residues 838–858 (CILYCFYKNVVLYIIELWFAF). Topologically, residues 859-870 (VNGFSGQILFER) are exoplasmic loop. A helical transmembrane segment spans residues 871–890 (WCIGLYNVIFTALPPFTLGI). At 891 to 920 (FERSCTQESMLRFPQLYRITQNAEGFNTKV) the chain is on the cytoplasmic side. The helical transmembrane segment at 921-942 (FWGHCINALVHSLILFWVPMKA) threads the bilayer. Residues 943–956 (LEHDTPVTSGHATD) lie on the Exoplasmic loop side of the membrane. Residues 957 to 979 (YLFVGNIVYTYVVVTVCLKAGLE) traverse the membrane as a helical segment. Topologically, residues 980–985 (TTAWTK) are cytoplasmic. The helical transmembrane segment at 986–1006 (FSHLAVWGSMLIWLVFFGVYS) threads the bilayer. The Exoplasmic loop segment spans residues 1007 to 1024 (TIWPTIPIAPDMKGQATM). A helical transmembrane segment spans residues 1025–1049 (VLSSAYFWLGLFLVPTACLIEDVAW). Residues 1050–1148 (RAAKHTCKKT…DTTKENSRKK (99 aa)) lie on the Cytoplasmic side of the membrane.

It belongs to the cation transport ATPase (P-type) (TC 3.A.3) family. Type IV subfamily. Component of a P4-ATPase flippase complex which consists of a catalytic alpha subunit and an accessory beta subunit. Interacts with TMEM30A to form a flippase complex. Mg(2+) is required as a cofactor. In terms of tissue distribution, found in testis, heart and brain. Most abundant in testis. Also detected in fetal tissues. Expressed in retinal photoreceptor cells; detected in retina outer nuclear layer and inner segment (at protein level).

It localises to the membrane. Its subcellular location is the golgi apparatus membrane. The protein resides in the endosome membrane. It is found in the cell membrane. The protein localises to the photoreceptor outer segment membrane. It localises to the photoreceptor inner segment membrane. It carries out the reaction ATP + H2O + phospholipidSide 1 = ADP + phosphate + phospholipidSide 2.. The catalysed reaction is a 1,2-diacyl-sn-glycero-3-phospho-L-serine(out) + ATP + H2O = a 1,2-diacyl-sn-glycero-3-phospho-L-serine(in) + ADP + phosphate + H(+). It catalyses the reaction a 1,2-diacyl-sn-glycero-3-phosphoethanolamine(in) + ATP + H2O = a 1,2-diacyl-sn-glycero-3-phosphoethanolamine(out) + ADP + phosphate + H(+). Its function is as follows. Catalytic component of a P4-ATPase flippase complex which catalyzes the hydrolysis of ATP coupled to the transport of aminophospholipids from the outer to the inner leaflet of various membranes and ensures the maintenance of asymmetric distribution of phospholipids. Able to translocate phosphatidylserine, but not phosphatidylcholine. Phospholipid translocation also seems to be implicated in vesicle formation and in uptake of lipid signaling molecules. Reconstituted to liposomes, the ATP8A2:TMEM30A flippase complex predominantly transports phosphatidylserine (PS) and to a lesser extent phosphatidylethanolamine (PE). Phospholipid translocation is not associated with a countertransport of an inorganic ion or other charged substrate from the cytoplasmic side toward the exoplasm in connection with the phosphorylation from ATP. ATP8A2:TMEM30A may be involved in regulation of neurite outgrowth. Proposed to function in the generation and maintenance of phospholipid asymmetry in photoreceptor disk membranes and neuronal axon membranes. May be involved in vesicle trafficking in neuronal cells. Required for normal visual and auditory function; involved in photoreceptor and inner ear spiral ganglion cell survival. The polypeptide is Phospholipid-transporting ATPase IB (Mus musculus (Mouse)).